A 423-amino-acid polypeptide reads, in one-letter code: Core protease OPG082 (423 aa).

Catalysis depends on residues histidine 241, aspartate 248, and cysteine 328.

Belongs to the peptidase C57 family.

It is found in the virion. Late protein responsible for processing most or all of the viral core and membrane proteins known to undergo morphogenesis-associated proteolysis. These proteolytic events are involved in the transformation of immature virions (IV) into mature virions (MV). Probably cleaves at least the OPG129, OPG136, OPG098, and OPG144 precursors preferentially at Ala-Gly-|-Ala motifs. Also seems to process Ala-Gly-|-Ser and Ala-Gly-|-Thr motifs. This chain is Core protease OPG082 (OPG083), found in Homo sapiens (Human).